The following is a 437-amino-acid chain: Serine--tRNA ligase (437 aa).

Residue 244-246 (TAE) participates in L-serine binding. 275-277 (RSE) provides a ligand contact to ATP. Glu298 contacts L-serine. 362–365 (EISS) is an ATP binding site. L-serine is bound at residue Ser397.

Belongs to the class-II aminoacyl-tRNA synthetase family. Type-1 seryl-tRNA synthetase subfamily. In terms of assembly, homodimer. The tRNA molecule binds across the dimer.

The protein resides in the cytoplasm. It carries out the reaction tRNA(Ser) + L-serine + ATP = L-seryl-tRNA(Ser) + AMP + diphosphate + H(+). The catalysed reaction is tRNA(Sec) + L-serine + ATP = L-seryl-tRNA(Sec) + AMP + diphosphate + H(+). Its pathway is aminoacyl-tRNA biosynthesis; selenocysteinyl-tRNA(Sec) biosynthesis; L-seryl-tRNA(Sec) from L-serine and tRNA(Sec): step 1/1. Functionally, catalyzes the attachment of serine to tRNA(Ser). Is also able to aminoacylate tRNA(Sec) with serine, to form the misacylated tRNA L-seryl-tRNA(Sec), which will be further converted into selenocysteinyl-tRNA(Sec). In Nitrosomonas europaea (strain ATCC 19718 / CIP 103999 / KCTC 2705 / NBRC 14298), this protein is Serine--tRNA ligase.